Reading from the N-terminus, the 264-residue chain is Thymidylate synthase (264 aa).

Residue R21 coordinates dUMP. H51 serves as a coordination point for (6R)-5,10-methylene-5,6,7,8-tetrahydrofolate. R126–R127 is a binding site for dUMP. The active-site Nucleophile is the C146. DUMP is bound by residues R166–D169, N177, and H207–Y209. (6R)-5,10-methylene-5,6,7,8-tetrahydrofolate is bound at residue D169. A263 provides a ligand contact to (6R)-5,10-methylene-5,6,7,8-tetrahydrofolate.

Belongs to the thymidylate synthase family. Bacterial-type ThyA subfamily. Homodimer.

The protein localises to the cytoplasm. The catalysed reaction is dUMP + (6R)-5,10-methylene-5,6,7,8-tetrahydrofolate = 7,8-dihydrofolate + dTMP. Its pathway is pyrimidine metabolism; dTTP biosynthesis. In terms of biological role, catalyzes the reductive methylation of 2'-deoxyuridine-5'-monophosphate (dUMP) to 2'-deoxythymidine-5'-monophosphate (dTMP) while utilizing 5,10-methylenetetrahydrofolate (mTHF) as the methyl donor and reductant in the reaction, yielding dihydrofolate (DHF) as a by-product. This enzymatic reaction provides an intracellular de novo source of dTMP, an essential precursor for DNA biosynthesis. The sequence is that of Thymidylate synthase from Polynucleobacter asymbioticus (strain DSM 18221 / CIP 109841 / QLW-P1DMWA-1) (Polynucleobacter necessarius subsp. asymbioticus).